Here is a 331-residue protein sequence, read N- to C-terminus: Pectate lyase B (331 aa).

Residues 1-25 (MKFTGSPLLWPSWLPLPAPPPPLPS) form the signal peptide. Residue asparagine 99 is glycosylated (N-linked (GlcNAc...) asparagine). Aspartate 139, aspartate 169, and aspartate 173 together coordinate Ca(2+). Residue arginine 226 is part of the active site.

It belongs to the polysaccharide lyase 1 family. It depends on Ca(2+) as a cofactor.

Its subcellular location is the secreted. It carries out the reaction Eliminative cleavage of (1-&gt;4)-alpha-D-galacturonan to give oligosaccharides with 4-deoxy-alpha-D-galact-4-enuronosyl groups at their non-reducing ends.. The protein operates within glycan metabolism; pectin degradation; 2-dehydro-3-deoxy-D-gluconate from pectin: step 2/5. Functionally, acts as a virulence factor active in plant tissue maceration. This chain is Pectate lyase B (PLB), found in Colletotrichum gloeosporioides (Anthracnose fungus).